We begin with the raw amino-acid sequence, 577 residues long: MGKLIKLITTLTVLVSLLQYCCEFNSGSISCERTQTLCHYTNPRVWNTYFSRNCELYKNKVSPGFDIVARKYDTAVKPVIDDATVKVNKVAIQPAFKVIHSQCKKWNCGKYYQLVRSPMVKTRRFFFAKYNAFVKPNIDKFFTAEFRSHLKERILKCKNIGHYYFTITSRCIKSKYDFIVGNTEEKLMGKFKNKDTHGIHGSVTHEPSSEDMVLTVSTMESDEEELTTTSTQTVVETITLDQEEASAVANHAHDDEASTDVEDSTDVNVNEQALLQEDFDMWSETILQKTQDVIQLFEKDVSKYIHGKLVEEANHFKAKFQSLDDKSKKFFSKISLAINDIECVEGIDSETGKKIFFDKSGSTEISQYITRELVREYFNETRSTLDELTNAMEKDLSEITDEIEKKVNAIREENVEVFEEWGDIIVNEWSKRMAYVDVINAHMGADDDTTLDEEKAKSSVNWKKFLKGKKQIIESRDKLAHHSADLSRVNAFRQKVQKKILSFTQESGEFLYILRSKANLQFQERERKERERKEREKAAAEEFQRQQELLLQQEEEDEEDVSYTSTSTITTTTTMTL.

The first 23 residues, 1 to 23 (MGKLIKLITTLTVLVSLLQYCCE), serve as a signal peptide directing secretion. Coiled-coil stretches lie at residues 379-416 (NETR…ENVE) and 513-561 (ILRS…EEDV). Positions 525-545 (RERKERERKEREKAAAEEFQR) are enriched in basic and acidic residues. Residues 525-577 (RERKERERKEREKAAAEEFQRQQELLLQQEEEDEEDVSYTSTSTITTTTTMTL) form a disordered region. Over residues 562 to 577 (SYTSTSTITTTTTMTL) the composition is skewed to low complexity.

The protein belongs to the SHE10 family. As to quaternary structure, component of the mitochondria-localized RNase mitochondrial RNA-processing (RNase MRP) composed of one single RNA encoded by the NME1 gene and at least 31 proteins. Absent in the nucleus-localized RNase MRP (NuMRP).

Its subcellular location is the mitochondrion. Its function is as follows. Involved in spore wall assembly. May be a component of the mitochondrial RNase MRP (MtMRP), a ribonucleoprotein endoribonuclease involved in the cleaving RNA transcripts to generate primers for DNA replication in mitochondria. The polypeptide is Outer spore wall assembly protein SHE10 (Saccharomyces cerevisiae (strain RM11-1a) (Baker's yeast)).